Reading from the N-terminus, the 459-residue chain is Cytosolic carboxypeptidase 6 (459 aa).

One can recognise a Peptidase M14 domain in the interval 142–418 (IPYTYGQMQI…AFCRALLNFY (277 aa)). Zn(2+)-binding residues include His204, Glu207, and His302. Glu376 functions as the Proton donor/acceptor in the catalytic mechanism.

Belongs to the peptidase M14 family. It depends on Zn(2+) as a cofactor. As to expression, expressed in labial and amphid neurons.

It localises to the cytoplasm. The catalysed reaction is (L-glutamyl)(n+1)-gamma-L-glutamyl-L-glutamyl-[protein] + H2O = (L-glutamyl)(n)-gamma-L-glutamyl-L-glutamyl-[protein] + L-glutamate. Metallocarboxypeptidase that catalyzes the removing of polyglutamate side chains that are present on the gamma-carboxyl group of glutamate residues of tubulin in sensory cilia. Probably via the deglutamylation of tubulin, promotes microtubule stability required for axon regrowth after injury. Also regulates microtubule dynamics in uterine muscle cells. This is Cytosolic carboxypeptidase 6 from Caenorhabditis elegans.